The primary structure comprises 380 residues: Lipid-A-disaccharide synthase (380 aa).

The protein belongs to the LpxB family.

The enzyme catalyses a lipid X + a UDP-2-N,3-O-bis[(3R)-3-hydroxyacyl]-alpha-D-glucosamine = a lipid A disaccharide + UDP + H(+). It functions in the pathway bacterial outer membrane biogenesis; LPS lipid A biosynthesis. Functionally, condensation of UDP-2,3-diacylglucosamine and 2,3-diacylglucosamine-1-phosphate to form lipid A disaccharide, a precursor of lipid A, a phosphorylated glycolipid that anchors the lipopolysaccharide to the outer membrane of the cell. The protein is Lipid-A-disaccharide synthase of Photobacterium profundum (strain SS9).